Here is a 656-residue protein sequence, read N- to C-terminus: Chaperone protein DnaK (656 aa).

Threonine 204 is subject to Phosphothreonine; by autocatalysis. Residues 607–656 (VYAKKGGAAGAPPGGEAEGEPQAQAGGKKEDVVDAEFEEVKDEKKKDEDK) form a disordered region. A compositionally biased stretch (low complexity) spans 620-632 (GGEAEGEPQAQAG). Residues 647–656 (KDEKKKDEDK) are compositionally biased toward basic and acidic residues.

It belongs to the heat shock protein 70 family.

Acts as a chaperone. The polypeptide is Chaperone protein DnaK (Coxiella burnetii (strain CbuK_Q154) (Coxiella burnetii (strain Q154))).